The sequence spans 434 residues: Glutamate-1-semialdehyde 2,1-aminomutase 1 (434 aa).

At lysine 270 the chain carries N6-(pyridoxal phosphate)lysine.

Belongs to the class-III pyridoxal-phosphate-dependent aminotransferase family. HemL subfamily. As to quaternary structure, homodimer. It depends on pyridoxal 5'-phosphate as a cofactor.

It localises to the cytoplasm. It catalyses the reaction (S)-4-amino-5-oxopentanoate = 5-aminolevulinate. It participates in porphyrin-containing compound metabolism; protoporphyrin-IX biosynthesis; 5-aminolevulinate from L-glutamyl-tRNA(Glu): step 2/2. In Bacillus anthracis (strain CDC 684 / NRRL 3495), this protein is Glutamate-1-semialdehyde 2,1-aminomutase 1.